The following is a 400-amino-acid chain: Nicotinate phosphoribosyltransferase (400 aa).

Phosphohistidine; by autocatalysis is present on histidine 220.

This sequence belongs to the NAPRTase family. Transiently phosphorylated on a His residue during the reaction cycle. Phosphorylation strongly increases the affinity for substrates and increases the rate of nicotinate D-ribonucleotide production. Dephosphorylation regenerates the low-affinity form of the enzyme, leading to product release.

The catalysed reaction is nicotinate + 5-phospho-alpha-D-ribose 1-diphosphate + ATP + H2O = nicotinate beta-D-ribonucleotide + ADP + phosphate + diphosphate. It functions in the pathway cofactor biosynthesis; NAD(+) biosynthesis; nicotinate D-ribonucleotide from nicotinate: step 1/1. Its function is as follows. Catalyzes the synthesis of beta-nicotinate D-ribonucleotide from nicotinate and 5-phospho-D-ribose 1-phosphate at the expense of ATP. This is Nicotinate phosphoribosyltransferase from Escherichia coli O127:H6 (strain E2348/69 / EPEC).